The chain runs to 358 residues: Membrane-bound lytic murein transglycosylase C (358 aa).

Residues 1-16 (MKKILALLVIAPLLIS) form the signal peptide. A lipid anchor (N-palmitoyl cysteine) is attached at Cys17. The S-diacylglycerol cysteine moiety is linked to residue Cys17.

The protein belongs to the transglycosylase Slt family.

The protein localises to the cell outer membrane. It catalyses the reaction Exolytic cleavage of the (1-&gt;4)-beta-glycosidic linkage between N-acetylmuramic acid (MurNAc) and N-acetylglucosamine (GlcNAc) residues in peptidoglycan, from either the reducing or the non-reducing ends of the peptidoglycan chains, with concomitant formation of a 1,6-anhydrobond in the MurNAc residue.. Its function is as follows. Murein-degrading enzyme. May play a role in recycling of muropeptides during cell elongation and/or cell division. This is Membrane-bound lytic murein transglycosylase C from Serratia proteamaculans (strain 568).